Consider the following 365-residue polypeptide: Class I histocompatibility antigen, Gogo-A*0501 alpha chain (365 aa).

The signal sequence occupies residues 1–24; sequence MAVVAPRTLLLLLSGALALTQTWA. The interval 25-114 is alpha-1; sequence GSHSMRYFST…ALRYYNQSED (90 aa). The Extracellular segment spans residues 25–308; it reads GSHSMRYFST…EPSSQPTIPI (284 aa). A glycan (N-linked (GlcNAc...) asparagine) is linked at Asn110. Residues 115–206 are alpha-2; that stretch reads GSHTIQRMYG…ENGKETLQRT (92 aa). 2 cysteine pairs are disulfide-bonded: Cys125–Cys188 and Cys227–Cys283. The tract at residues 207–298 is alpha-3; sequence DAPKTHTTHQ…GLPKPLTLRW (92 aa). An Ig-like C1-type domain is found at 209–295; the sequence is PKTHTTHQAV…QHEGLPKPLT (87 aa). The interval 299–308 is connecting peptide; sequence EPSSQPTIPI. The chain crosses the membrane as a helical span at residues 309–332; the sequence is VGIIAGLVLFGAVIAGAVVAAVRW. Over 333 to 365 the chain is Cytoplasmic; the sequence is RRKSSDRKGGSYSQAASSDSAQGSDVSLTACKV. The interval 338–365 is disordered; the sequence is DRKGGSYSQAASSDSAQGSDVSLTACKV. Residues 342-359 are compositionally biased toward low complexity; that stretch reads GSYSQAASSDSAQGSDVS. At Ser343 the chain carries Phosphoserine. Tyr344 bears the Phosphotyrosine mark. Residues Ser345, Ser349, Ser352, Ser356, and Ser359 each carry the phosphoserine modification.

This sequence belongs to the MHC class I family. As to quaternary structure, heterodimer of an alpha chain and a beta chain (beta-2-microglobulin).

It is found in the membrane. Involved in the presentation of foreign antigens to the immune system. The polypeptide is Class I histocompatibility antigen, Gogo-A*0501 alpha chain (Gorilla gorilla gorilla (Western lowland gorilla)).